The sequence spans 358 residues: 4-hydroxy-3-methylbut-2-en-1-yl diphosphate synthase (flavodoxin) (358 aa).

[4Fe-4S] cluster is bound by residues cysteine 270, cysteine 273, cysteine 305, and glutamate 312.

The protein belongs to the IspG family. [4Fe-4S] cluster serves as cofactor.

The enzyme catalyses (2E)-4-hydroxy-3-methylbut-2-enyl diphosphate + oxidized [flavodoxin] + H2O + 2 H(+) = 2-C-methyl-D-erythritol 2,4-cyclic diphosphate + reduced [flavodoxin]. It participates in isoprenoid biosynthesis; isopentenyl diphosphate biosynthesis via DXP pathway; isopentenyl diphosphate from 1-deoxy-D-xylulose 5-phosphate: step 5/6. In terms of biological role, converts 2C-methyl-D-erythritol 2,4-cyclodiphosphate (ME-2,4cPP) into 1-hydroxy-2-methyl-2-(E)-butenyl 4-diphosphate. The polypeptide is 4-hydroxy-3-methylbut-2-en-1-yl diphosphate synthase (flavodoxin) (Ruthia magnifica subsp. Calyptogena magnifica).